Consider the following 874-residue polypeptide: Leucine--tRNA ligase (874 aa).

Residues 47–57 (PYPSGKLHMGH) carry the 'HIGH' region motif. The short motif at 636 to 640 (KMSKS) is the 'KMSKS' region element. Residue Lys639 coordinates ATP.

This sequence belongs to the class-I aminoacyl-tRNA synthetase family.

The protein localises to the cytoplasm. It carries out the reaction tRNA(Leu) + L-leucine + ATP = L-leucyl-tRNA(Leu) + AMP + diphosphate. The sequence is that of Leucine--tRNA ligase from Acinetobacter baumannii (strain SDF).